The following is a 130-amino-acid chain: MSMQDPIADMLTRIRNGQAAKHVSVKMPSAKLKIAIAKVLKEEGYITDYAVADEAKPELEVTLKYFQGQPVVETIQRVSRPGLRIYKGKNELPKVMGGLGVAIVSTSKGLMTDRTARQNGMGGEVICYVA.

This sequence belongs to the universal ribosomal protein uS8 family. As to quaternary structure, part of the 30S ribosomal subunit. Contacts proteins S5 and S12.

Functionally, one of the primary rRNA binding proteins, it binds directly to 16S rRNA central domain where it helps coordinate assembly of the platform of the 30S subunit. This is Small ribosomal subunit protein uS8 from Shewanella piezotolerans (strain WP3 / JCM 13877).